A 668-amino-acid polypeptide reads, in one-letter code: Bifunctional polymyxin resistance protein ArnA (668 aa).

The interval 1–307 (MSNKAVVFAY…ELGLVDGSLL (307 aa)) is formyltransferase ArnAFT. His106 (proton donor; for formyltransferase activity) is an active-site residue. Residues Arg116 and 138 to 142 (VKRAD) each bind (6R)-10-formyltetrahydrofolate. Residues 317–668 (RRTRVLILGV…IADRAKQEAR (352 aa)) form a dehydrogenase ArnADH region. NAD(+)-binding positions include Asp350 and 371-372 (DI). UDP-alpha-D-glucuronate contacts are provided by residues Ala396, Tyr401, and 435–436 (TS). Glu437 serves as the catalytic Proton acceptor; for decarboxylase activity. UDP-alpha-D-glucuronate-binding positions include Arg463, Asn494, 528 to 537 (RLFDGGEQKR), and Tyr615. The Proton donor; for decarboxylase activity role is filled by Arg621.

It in the N-terminal section; belongs to the Fmt family. UDP-L-Ara4N formyltransferase subfamily. This sequence in the C-terminal section; belongs to the NAD(P)-dependent epimerase/dehydratase family. UDP-glucuronic acid decarboxylase subfamily. In terms of assembly, homohexamer, formed by a dimer of trimers.

The catalysed reaction is UDP-alpha-D-glucuronate + NAD(+) = UDP-beta-L-threo-pentopyranos-4-ulose + CO2 + NADH. It catalyses the reaction UDP-4-amino-4-deoxy-beta-L-arabinose + (6R)-10-formyltetrahydrofolate = UDP-4-deoxy-4-formamido-beta-L-arabinose + (6S)-5,6,7,8-tetrahydrofolate + H(+). Its pathway is nucleotide-sugar biosynthesis; UDP-4-deoxy-4-formamido-beta-L-arabinose biosynthesis; UDP-4-deoxy-4-formamido-beta-L-arabinose from UDP-alpha-D-glucuronate: step 1/3. It functions in the pathway nucleotide-sugar biosynthesis; UDP-4-deoxy-4-formamido-beta-L-arabinose biosynthesis; UDP-4-deoxy-4-formamido-beta-L-arabinose from UDP-alpha-D-glucuronate: step 3/3. It participates in bacterial outer membrane biogenesis; lipopolysaccharide biosynthesis. Its function is as follows. Bifunctional enzyme that catalyzes the oxidative decarboxylation of UDP-glucuronic acid (UDP-GlcUA) to UDP-4-keto-arabinose (UDP-Ara4O) and the addition of a formyl group to UDP-4-amino-4-deoxy-L-arabinose (UDP-L-Ara4N) to form UDP-L-4-formamido-arabinose (UDP-L-Ara4FN). The modified arabinose is attached to lipid A and is required for resistance to polymyxin and cationic antimicrobial peptides. This chain is Bifunctional polymyxin resistance protein ArnA, found in Pseudomonas fluorescens (strain ATCC BAA-477 / NRRL B-23932 / Pf-5).